A 1082-amino-acid chain; its full sequence is Inner tegument protein (1082 aa).

Residues Asp604–Phe1082 form an interaction with large tegument protein region.

This sequence belongs to the herpesviridae inner tegument protein family. In terms of assembly, interacts (via C-terminus) with the large tegument protein/LTP (via N-terminus).

The protein localises to the virion tegument. Its subcellular location is the host cytoplasm. It localises to the host nucleus. The protein resides in the host Golgi apparatus. It is found in the host trans-Golgi network. Its function is as follows. Plays an essential role in cytoplasmic secondary envelopment during viral egress. Interacts with the capsid via the large tegument protein/LTP and participates in its transport to the host trans-Golgi network (TGN) where secondary envelopment occurs. Modulates tegumentation and capsid accumulation at the viral assembly complex. This chain is Inner tegument protein (U30), found in Homo sapiens (Human).